The chain runs to 339 residues: MDQPAWKNPRTALIVDGSDAARQRRIPNLASVDLNLLVELEALLQYRNITHAAQHVGRSQPAMSRALSRLRDMFNDDLLVRGSSGLVPTPQAEHLAQMLPSVLNAIRELVSCSSGLRDLRSKVTMAMPDHQSLVLLPYLLPRLGERVPHVDIVTEPLLDGALRRLEQGEIDFAIGQIGAAPPGYLRRGLYADRFTCLLRHDHPALEQEWSVGTFAALRHASIASDSNEGLGQVYDGLVRFGLPGPIVVSNVLTAAVVVAMTDLVLMIPNRVATRVATMLPLAIVDPPVELKPYEVALIWHQRCHHDLEHRVLRREIAAAARMGRLDVSQDQRARRQNDS.

The HTH lysR-type domain occupies 32-89; the sequence is VDLNLLVELEALLQYRNITHAAQHVGRSQPAMSRALSRLRDMFNDDLLVRGSSGLVPT. Positions 49–68 form a DNA-binding region, H-T-H motif; that stretch reads ITHAAQHVGRSQPAMSRALS.

This sequence belongs to the LysR transcriptional regulatory family.

Its function is as follows. Acts in trans to stimulate nod gene expression. In Sinorhizobium fredii (strain NBRC 101917 / NGR234), this protein is HTH-type transcriptional regulator SyrM 2 (syrM2).